The following is a 294-amino-acid chain: N-acetylmuramic acid 6-phosphate etherase (294 aa).

The region spanning 56-219 is the SIS domain; it reads TSYSLKNGGR…STLSMVSVGK (164 aa). The active-site Proton donor is the Glu-84. Glu-115 is an active-site residue.

Belongs to the GCKR-like family. MurNAc-6-P etherase subfamily. As to quaternary structure, homodimer.

The catalysed reaction is N-acetyl-D-muramate 6-phosphate + H2O = N-acetyl-D-glucosamine 6-phosphate + (R)-lactate. The protein operates within amino-sugar metabolism; 1,6-anhydro-N-acetylmuramate degradation. Its pathway is amino-sugar metabolism; N-acetylmuramate degradation. It participates in cell wall biogenesis; peptidoglycan recycling. Its function is as follows. Specifically catalyzes the cleavage of the D-lactyl ether substituent of MurNAc 6-phosphate, producing GlcNAc 6-phosphate and D-lactate. Together with AnmK, is also required for the utilization of anhydro-N-acetylmuramic acid (anhMurNAc) either imported from the medium or derived from its own cell wall murein, and thus plays a role in cell wall recycling. The chain is N-acetylmuramic acid 6-phosphate etherase from Francisella tularensis subsp. novicida (strain U112).